The primary structure comprises 399 residues: Putative gustatory receptor 59e (399 aa).

Over 1 to 33 (MDSSYWENLLLTINRFLGVYPSGRVGVLRWLHT) the chain is Cytoplasmic. Residues 34–54 (LWSLFLLMYIWTGSIVKCLEF) traverse the membrane as a helical segment. At 55 to 65 (TVEIPTIEKLL) the chain is on the extracellular side. A helical transmembrane segment spans residues 66-86 (YLMEFPGNMATIAILVYYAVL). Residues 87–120 (NRPLAHGAELQIERIITGLKGKAKRLVYKRHGQR) lie on the Cytoplasmic side of the membrane. Residues 121-141 (TLHLMATTLVFHGLCVLVDVV) form a helical membrane-spanning segment. The Extracellular segment spans residues 142-206 (NYDFEFWTTW…RPPQGSTKLD (65 aa)). The chain crosses the membrane as a helical span at residues 207 to 227 (ACYESAFAVLVDAGGGSALMI). The Cytoplasmic portion of the chain corresponds to 228–250 (EEMRYTCNLIEQVHSQFLLRFGL). The helical transmembrane segment at 251–271 (YLVLNLLNSLVSICVELYLIF) threads the bilayer. The Extracellular segment spans residues 272 to 282 (NFFETPLWEES). Residues 283-303 (VLLVYRLLWLAMHGGRIWFIL) traverse the membrane as a helical segment. Over 304 to 361 (SVNEQILEQKCNLCQLLNELEVCSSRLQRTINRFLLQLQRSIDQPLEACGIVTLDTRS) the chain is Cytoplasmic. The chain crosses the membrane as a helical span at residues 362–382 (LGGFIGVLMAIVIFLIQIGLG). N-linked (GlcNAc...) asparagine glycosylation is found at asparagine 383 and asparagine 392. Residues 383-399 (NKSLMGVALNRSNWVYV) lie on the Extracellular side of the membrane.

This sequence belongs to the insect chemoreceptor superfamily. Gustatory receptor (GR) family. Gr10a subfamily. As to expression, expressed in the adult labellar chemosensory neurons. In larvae, is expressed in neurons of the terminal external chemosensory organ.

It is found in the cell membrane. In terms of biological role, probable gustatory receptor which mediates acceptance or avoidance behavior, depending on its substrates. The polypeptide is Putative gustatory receptor 59e (Gr59e) (Drosophila melanogaster (Fruit fly)).